A 437-amino-acid chain; its full sequence is Trigger factor (437 aa).

In terms of domain architecture, PPIase FKBP-type spans 163–248 (SDRVIIDFEG…LNNVSEATLP (86 aa)).

It belongs to the FKBP-type PPIase family. Tig subfamily.

It is found in the cytoplasm. It carries out the reaction [protein]-peptidylproline (omega=180) = [protein]-peptidylproline (omega=0). Involved in protein export. Acts as a chaperone by maintaining the newly synthesized protein in an open conformation. Functions as a peptidyl-prolyl cis-trans isomerase. This chain is Trigger factor, found in Neisseria meningitidis serogroup C / serotype 2a (strain ATCC 700532 / DSM 15464 / FAM18).